Here is a 511-residue protein sequence, read N- to C-terminus: 3-octaprenyl-4-hydroxybenzoate carboxy-lyase (511 aa).

Residue N176 coordinates Mn(2+). Residues 179 to 181 (IYR), 193 to 195 (RWL), and 198 to 199 (RG) each bind prenylated FMN. E242 is a Mn(2+) binding site. Catalysis depends on D311, which acts as the Proton donor.

The protein belongs to the UbiD family. In terms of assembly, homohexamer. It depends on prenylated FMN as a cofactor. Requires Mn(2+) as cofactor.

The protein resides in the cell membrane. The catalysed reaction is a 4-hydroxy-3-(all-trans-polyprenyl)benzoate + H(+) = a 2-(all-trans-polyprenyl)phenol + CO2. It functions in the pathway cofactor biosynthesis; ubiquinone biosynthesis. Functionally, catalyzes the decarboxylation of 3-octaprenyl-4-hydroxy benzoate to 2-octaprenylphenol, an intermediate step in ubiquinone biosynthesis. This chain is 3-octaprenyl-4-hydroxybenzoate carboxy-lyase, found in Laribacter hongkongensis (strain HLHK9).